The primary structure comprises 416 residues: Multifunctional CCA protein (416 aa).

The ATP site is built by glycine 8 and arginine 11. Residues glycine 8 and arginine 11 each contribute to the CTP site. Aspartate 21 and aspartate 23 together coordinate Mg(2+). ATP is bound by residues arginine 91, arginine 138, and arginine 141. Residues arginine 91, arginine 138, and arginine 141 each contribute to the CTP site. The HD domain occupies 229-331; it reads TGLHQELVSD…YELLQRCDAF (103 aa).

The protein belongs to the tRNA nucleotidyltransferase/poly(A) polymerase family. Bacterial CCA-adding enzyme type 1 subfamily. Monomer. Can also form homodimers and oligomers. It depends on Mg(2+) as a cofactor. Ni(2+) serves as cofactor.

The catalysed reaction is a tRNA precursor + 2 CTP + ATP = a tRNA with a 3' CCA end + 3 diphosphate. It carries out the reaction a tRNA with a 3' CCA end + 2 CTP + ATP = a tRNA with a 3' CCACCA end + 3 diphosphate. In terms of biological role, catalyzes the addition and repair of the essential 3'-terminal CCA sequence in tRNAs without using a nucleic acid template. Adds these three nucleotides in the order of C, C, and A to the tRNA nucleotide-73, using CTP and ATP as substrates and producing inorganic pyrophosphate. tRNA 3'-terminal CCA addition is required both for tRNA processing and repair. Also involved in tRNA surveillance by mediating tandem CCA addition to generate a CCACCA at the 3' terminus of unstable tRNAs. While stable tRNAs receive only 3'-terminal CCA, unstable tRNAs are marked with CCACCA and rapidly degraded. In Xylella fastidiosa (strain M23), this protein is Multifunctional CCA protein.